The sequence spans 208 residues: Methylthioribulose-1-phosphate dehydratase (208 aa).

H101 and H103 together coordinate Zn(2+).

This sequence belongs to the aldolase class II family. MtnB subfamily. Zn(2+) serves as cofactor.

It carries out the reaction 5-(methylsulfanyl)-D-ribulose 1-phosphate = 5-methylsulfanyl-2,3-dioxopentyl phosphate + H2O. It participates in amino-acid biosynthesis; L-methionine biosynthesis via salvage pathway; L-methionine from S-methyl-5-thio-alpha-D-ribose 1-phosphate: step 2/6. Functionally, catalyzes the dehydration of methylthioribulose-1-phosphate (MTRu-1-P) into 2,3-diketo-5-methylthiopentyl-1-phosphate (DK-MTP-1-P). The polypeptide is Methylthioribulose-1-phosphate dehydratase (Gluconobacter oxydans (strain 621H) (Gluconobacter suboxydans)).